We begin with the raw amino-acid sequence, 497 residues long: MNVFFMFSKPGKLADDRNPLEECFRETDYEEFLEIAKNGLSTTSNPKRVVIVGAGMSGLSAAYVLANAGHQVTVLEASERAGGQVKTYRNEKEGWYANLGPMRLPEKHRIVREYIRKFGLQLNEFSQENENAWYFIKNIRKRVGEVNKDPGVLDYPVKPSEVGKSAGQLYEESLQKAVEELRRTNCSYMLNKYDTYSTKEYLLKEGNLSPGAVDMIGDLLNEDSGYYVSFIESLKHDDIFAYEKRFDEIVGGMDKLPTSMYQAIQEKVHLNARVIKIQQDVKEVTVTYQTSEKETLSVTADYVIVCTTSRAARRIKFEPPLPPKKAHALRSVHYRSGTKIFLTCTKKFWEDDGIHGGKSTTDLPSRFIYYPNHNFPNGVGVIIAYGIGDDANYFEALDFEDCGDIVINDLSLIHQLPKEEIQAICRPSMIQRWSLDKYAMGGITTFTPYQFQHFSEALTAPVDRIYFAGEYTAQAHGWIASTIKSGPEGLDVNRASE.

The signal sequence occupies residues 1-13; sequence MNVFFMFSKPGKL. C23 and C186 are disulfide-bonded. FAD contacts are provided by residues 56–57, 76–77, 76–80, Q84, and 100–103; these read MS, EA, EASER, and GPMR. R103 contacts substrate. The N-linked (GlcNAc...) asparagine glycan is linked to N185. H236 lines the substrate pocket. Residue V274 participates in FAD binding. C344 and C425 form a disulfide bridge. Residue Y385 coordinates substrate. FAD-binding positions include E470, 477–482, and 478–482; these read GWIAST and WIAST. 477 to 478 is a binding site for substrate; that stretch reads GW.

Belongs to the flavin monoamine oxidase family. FIG1 subfamily. As to quaternary structure, homodimer; non-covalently linked. Requires FAD as cofactor. As to expression, expressed by the venom gland.

It is found in the secreted. It carries out the reaction an L-alpha-amino acid + O2 + H2O = a 2-oxocarboxylate + H2O2 + NH4(+). The catalysed reaction is L-leucine + O2 + H2O = 4-methyl-2-oxopentanoate + H2O2 + NH4(+). The enzyme catalyses L-phenylalanine + O2 + H2O = 3-phenylpyruvate + H2O2 + NH4(+). It catalyses the reaction L-tryptophan + O2 + H2O = indole-3-pyruvate + H2O2 + NH4(+). It carries out the reaction L-methionine + O2 + H2O = 4-methylsulfanyl-2-oxobutanoate + H2O2 + NH4(+). The catalysed reaction is L-isoleucine + O2 + H2O = (S)-3-methyl-2-oxopentanoate + H2O2 + NH4(+). The enzyme catalyses L-tyrosine + O2 + H2O = 3-(4-hydroxyphenyl)pyruvate + H2O2 + NH4(+). It catalyses the reaction L-cysteine + O2 + H2O = 2-oxo-3-sulfanylpropanoate + H2O2 + NH4(+). Catalyzes an oxidative deamination of predominantly hydrophobic and aromatic L-amino acids, thus producing hydrogen peroxide that may contribute to the diverse toxic effects of this enzyme. Shows high specificity for L-Met, L-Leu, L-Phe, L-Tyr, L-Ile, L-Trp, a moderate activity on L-Cys and low activity on L-Val, L-Lys, L-Arg, L-His, L-Gln, L-Thr and L-Ser. Exhibits diverse biological activities, such as hemorrhage, hemolysis, edema, apoptosis of vascular endothelial cells or tumor cell lines, and antibacterial, as well as regulation of platelet aggregation. Effects of snake L-amino oxidases on platelets are controversial, since they either induce aggregation or inhibit agonist-induced aggregation. These different effects are probably due to different experimental conditions. In vitro, shows parasiticidal activities against both trypanosomes and leishmania, as a result of enzyme-catalyzed hydrogen peroxide production. This chain is L-amino-acid oxidase BjussuLAAO-I, found in Bothrops jararacussu (Jararacussu).